A 749-amino-acid polypeptide reads, in one-letter code: Probable galactinol--sucrose galactosyltransferase 6 (749 aa).

This sequence belongs to the glycosyl hydrolases 36 family.

The enzyme catalyses alpha-D-galactosyl-(1-&gt;3)-1D-myo-inositol + sucrose = raffinose + myo-inositol. Its function is as follows. Transglycosidase operating by a ping-pong reaction mechanism. Involved in the synthesis of raffinose, a major soluble carbohydrate in seeds, roots and tubers. The polypeptide is Probable galactinol--sucrose galactosyltransferase 6 (RFS6) (Arabidopsis thaliana (Mouse-ear cress)).